Reading from the N-terminus, the 75-residue chain is CDC42 small effector protein 2-C (75 aa).

Residues Cys-10 and Cys-11 are each lipidated (S-palmitoyl cysteine). The CRIB domain maps to Ile-29–Gly-42.

Belongs to the CDC42SE/SPEC family.

It localises to the cytoplasm. Its subcellular location is the cytoskeleton. The protein localises to the cell membrane. In terms of biological role, probably involved in the organization of the actin cytoskeleton by acting downstream of CDC42, inducing actin filament assembly. The sequence is that of CDC42 small effector protein 2-C (cdc42se2-c) from Xenopus laevis (African clawed frog).